The sequence spans 360 residues: Phosphoserine aminotransferase (360 aa).

An L-glutamate-binding site is contributed by R42. Residues 76–77, W102, T153, D172, and Q195 contribute to the pyridoxal 5'-phosphate site; that span reads AR. An N6-(pyridoxal phosphate)lysine modification is found at K196. 237-238 serves as a coordination point for pyridoxal 5'-phosphate; the sequence is NT.

This sequence belongs to the class-V pyridoxal-phosphate-dependent aminotransferase family. SerC subfamily. As to quaternary structure, homodimer. Pyridoxal 5'-phosphate is required as a cofactor.

Its subcellular location is the cytoplasm. The catalysed reaction is O-phospho-L-serine + 2-oxoglutarate = 3-phosphooxypyruvate + L-glutamate. It catalyses the reaction 4-(phosphooxy)-L-threonine + 2-oxoglutarate = (R)-3-hydroxy-2-oxo-4-phosphooxybutanoate + L-glutamate. The protein operates within amino-acid biosynthesis; L-serine biosynthesis; L-serine from 3-phospho-D-glycerate: step 2/3. It functions in the pathway cofactor biosynthesis; pyridoxine 5'-phosphate biosynthesis; pyridoxine 5'-phosphate from D-erythrose 4-phosphate: step 3/5. In terms of biological role, catalyzes the reversible conversion of 3-phosphohydroxypyruvate to phosphoserine and of 3-hydroxy-2-oxo-4-phosphonooxybutanoate to phosphohydroxythreonine. The protein is Phosphoserine aminotransferase of Photobacterium profundum (strain SS9).